The following is a 294-amino-acid chain: Cutinase (294 aa).

An N-terminal signal peptide occupies residues 1–33; the sequence is MLRARPSHRLASAAAVVAATGAALLAGSSPAAA. An intrachain disulfide couples cysteine 36 to cysteine 107. Residue serine 118 is the Nucleophile of the active site. An intrachain disulfide couples cysteine 180 to cysteine 187. Residue aspartate 184 is part of the active site. Histidine 198 serves as the catalytic Proton donor/acceptor. The interval 222-241 is disordered; it reads GTPTTPTPTPTPTPVPTTCV. Pro residues predominate over residues 226-236; it reads TPTPTPTPTPV. Positions 240–294 are may be involved in substrate binding; the sequence is CVRDSTRDHVAADRAVSLYGRAYARGSRDSLGATSSYNVVSLQQVEGGWRLVTAC.

This sequence belongs to the cutinase family.

The protein resides in the secreted. The enzyme catalyses cutin + H2O = cutin monomers.. The catalysed reaction is a tetradecanoate ester + H2O = an aliphatic alcohol + tetradecanoate + H(+). It catalyses the reaction hexadecanoate ester + H2O = an aliphatic alcohol + hexadecanoate + H(+). It carries out the reaction a butanoate ester + H2O = an aliphatic alcohol + butanoate + H(+). The enzyme catalyses an octanoate ester + H2O = an aliphatic alcohol + octanoate + H(+). In terms of biological role, catalyzes the hydrolysis of cutin, a polyester that forms the structure of plant cuticle. Shows esterase activity towards p-nitrophenol-linked aliphatic esters (pNP-aliphatic esters). Can depolymerize synthetic polyesters such as poly(epsilon-caprolactone) (PCL) and poly(1,3-propylene adipate) (PPA). Exhibits some activity on poly(lactic acid) (PLA). Can bind but not hydrolyze poly(hydroxybutyrate) (PHB). The polypeptide is Cutinase (Kineococcus radiotolerans (strain ATCC BAA-149 / DSM 14245 / SRS30216)).